Reading from the N-terminus, the 235-residue chain is Large ribosomal subunit protein uL1 (235 aa).

It belongs to the universal ribosomal protein uL1 family. As to quaternary structure, part of the 50S ribosomal subunit.

Binds directly to 23S rRNA. The L1 stalk is quite mobile in the ribosome, and is involved in E site tRNA release. In terms of biological role, protein L1 is also a translational repressor protein, it controls the translation of the L11 operon by binding to its mRNA. In Synechococcus sp. (strain CC9311), this protein is Large ribosomal subunit protein uL1.